Consider the following 398-residue polypeptide: 1-deoxy-D-xylulose 5-phosphate reductoisomerase (398 aa).

NADPH is bound by residues T10, G11, S12, V13, G36, K37, N38, and N124. Position 125 (K125) interacts with 1-deoxy-D-xylulose 5-phosphate. E126 provides a ligand contact to NADPH. Residue D150 coordinates Mn(2+). 1-deoxy-D-xylulose 5-phosphate-binding residues include S151, E152, S186, and H209. A Mn(2+)-binding site is contributed by E152. Position 215 (G215) interacts with NADPH. 1-deoxy-D-xylulose 5-phosphate contacts are provided by S222, N227, K228, and E231. Residue E231 participates in Mn(2+) binding.

This sequence belongs to the DXR family. In terms of assembly, homodimer. Mg(2+) is required as a cofactor. Mn(2+) serves as cofactor.

It carries out the reaction 2-C-methyl-D-erythritol 4-phosphate + NADP(+) = 1-deoxy-D-xylulose 5-phosphate + NADPH + H(+). The protein operates within isoprenoid biosynthesis; isopentenyl diphosphate biosynthesis via DXP pathway; isopentenyl diphosphate from 1-deoxy-D-xylulose 5-phosphate: step 1/6. Catalyzes the NADPH-dependent rearrangement and reduction of 1-deoxy-D-xylulose-5-phosphate (DXP) to 2-C-methyl-D-erythritol 4-phosphate (MEP). The polypeptide is 1-deoxy-D-xylulose 5-phosphate reductoisomerase (Photorhabdus laumondii subsp. laumondii (strain DSM 15139 / CIP 105565 / TT01) (Photorhabdus luminescens subsp. laumondii)).